The primary structure comprises 500 residues: Polyamine oxidase 1 (500 aa).

The signal sequence occupies residues 1 to 28 (MSSSPSFGLLAVAALLLALSLAQHGSLA). FAD-binding positions include 42–43 (MS), Glu63, Arg71, and 87–88 (NW). Substrate is bound at residue Glu90. N-linked (GlcNAc...) asparagine glycosylation occurs at Asn105. Glu198 provides a ligand contact to substrate. FAD-binding residues include Val265, Tyr427, and Glu458. Substrate is bound at residue Gly466. Residue 467-468 (YV) coordinates FAD. The cysteines at positions 485 and 491 are disulfide-linked.

It belongs to the flavin monoamine oxidase family. In terms of assembly, monomer. The cofactor is FAD.

It is found in the secreted. The protein localises to the extracellular space. Its subcellular location is the apoplast. The protein resides in the cell wall. The enzyme catalyses spermidine + O2 + H2O = 4-aminobutanal + propane-1,3-diamine + H2O2. The catalysed reaction is N(8)-acetylspermidine + O2 + H2O = 4-acetamidobutanal + propane-1,3-diamine + H2O2. It catalyses the reaction spermine + O2 + H2O = N-(3-aminopropyl)-4-aminobutanal + propane-1,3-diamine + H2O2. It carries out the reaction N(1)-acetylspermine + O2 + H2O = N-(3-acetamidopropyl)-4-aminobutanal + propane-1,3-diamine + H2O2. It participates in amine and polyamine degradation; spermine degradation. Flavoenzyme involved in polyamine back-conversion. Catalyzes the oxidation of the secondary amino group of polyamines, such as spermine, spermidine and their acetyl derivatives. Plays an important role in the regulation of polyamine intracellular concentration. The protein is Polyamine oxidase 1 of Zea mays (Maize).